A 344-amino-acid chain; its full sequence is Ferredoxin--NADP reductase (344 aa).

Ser12, Asp31, Lys39, Tyr43, Val83, Ile118, Asp285, and Ser326 together coordinate FAD.

The protein belongs to the ferredoxin--NADP reductase type 2 family. As to quaternary structure, homodimer. FAD is required as a cofactor.

The enzyme catalyses 2 reduced [2Fe-2S]-[ferredoxin] + NADP(+) + H(+) = 2 oxidized [2Fe-2S]-[ferredoxin] + NADPH. The chain is Ferredoxin--NADP reductase from Staphylococcus aureus (strain JH1).